The chain runs to 194 residues: High mobility group protein B4 (194 aa).

2 consecutive DNA-binding regions (HMG box) follow at residues Pro-9–Phe-79 and Pro-93–Arg-161.

It belongs to the HMGB family.

Its subcellular location is the nucleus. The protein resides in the chromosome. This chain is High mobility group protein B4 (HMGB4), found in Bos taurus (Bovine).